A 58-amino-acid polypeptide reads, in one-letter code: Conotoxin Ar5.4 (58 aa).

The propeptide occupies 1–20; that stretch reads RIQSDLIRAALEDADMKNEK.

The protein belongs to the conotoxin T superfamily. In terms of processing, contains 2 disulfide bonds that can be either 'C1-C3, C2-C4' or 'C1-C4, C2-C3', since these disulfide connectivities have been observed for conotoxins with cysteine framework V (for examples, see AC P0DQQ7 and AC P81755). In terms of tissue distribution, expressed by the venom duct.

The protein localises to the secreted. This is Conotoxin Ar5.4 from Conus arenatus (Sand-dusted cone).